A 461-amino-acid polypeptide reads, in one-letter code: Ribulose bisphosphate carboxylase (461 aa).

N112 is a substrate binding site. K167 functions as the Proton acceptor in the catalytic mechanism. K169 is a binding site for substrate. 3 residues coordinate Mg(2+): K192, D194, and E195. K192 carries the N6-carboxylysine modification. The Proton acceptor role is filled by H288. R289, H322, and S369 together coordinate substrate.

The protein belongs to the RuBisCO large chain family. Type II subfamily. As to quaternary structure, homodimer. Mg(2+) serves as cofactor.

The enzyme catalyses 2 (2R)-3-phosphoglycerate + 2 H(+) = D-ribulose 1,5-bisphosphate + CO2 + H2O. It carries out the reaction D-ribulose 1,5-bisphosphate + O2 = 2-phosphoglycolate + (2R)-3-phosphoglycerate + 2 H(+). Its function is as follows. RuBisCO catalyzes two reactions: the carboxylation of D-ribulose 1,5-bisphosphate, the primary event in carbon dioxide fixation, as well as the oxidative fragmentation of the pentose substrate. Both reactions occur simultaneously and in competition at the same active site. The polypeptide is Ribulose bisphosphate carboxylase (Rhodopseudomonas palustris (strain BisB5)).